A 170-amino-acid polypeptide reads, in one-letter code: Protein BTG1 (170 aa).

The protein belongs to the BTG family.

Functionally, anti-proliferative protein. The polypeptide is Protein BTG1 (BTG1) (Gallus gallus (Chicken)).